Reading from the N-terminus, the 312-residue chain is Phosphoribosylglycinamide formyltransferase, chloroplastic (312 aa).

The N-terminal 73 residues, 1–73, are a transit peptide targeting the chloroplast; it reads MEAQQIISRF…EVCSSSWRIW (73 aa). 109–111 lines the N(1)-(5-phospho-beta-D-ribosyl)glycinamide pocket; that stretch reads GSN. (6R)-10-formyltetrahydrofolate is bound by residues Lys162, 187 to 190, and Asn204; that span reads LKLI. Catalysis depends on His206, which acts as the Proton donor. Asp247 is a binding site for (6R)-10-formyltetrahydrofolate. Glu276 contributes to the N(1)-(5-phospho-beta-D-ribosyl)glycinamide binding site.

It belongs to the GART family.

It is found in the plastid. It localises to the chloroplast. It carries out the reaction N(1)-(5-phospho-beta-D-ribosyl)glycinamide + (6R)-10-formyltetrahydrofolate = N(2)-formyl-N(1)-(5-phospho-beta-D-ribosyl)glycinamide + (6S)-5,6,7,8-tetrahydrofolate + H(+). The protein operates within purine metabolism; IMP biosynthesis via de novo pathway; N(2)-formyl-N(1)-(5-phospho-D-ribosyl)glycinamide from N(1)-(5-phospho-D-ribosyl)glycinamide (10-formyl THF route): step 1/1. This is Phosphoribosylglycinamide formyltransferase, chloroplastic (PUR3) from Vigna unguiculata (Cowpea).